The chain runs to 429 residues: Probable M18 family aminopeptidase 2 (429 aa).

Residues histidine 82, histidine 156, and histidine 401 each contribute to the Zn(2+) site.

It belongs to the peptidase M18 family. Zn(2+) serves as cofactor.

This chain is Probable M18 family aminopeptidase 2, found in Ectopseudomonas mendocina (strain ymp) (Pseudomonas mendocina).